Reading from the N-terminus, the 286-residue chain is 2,3,4,5-tetrahydropyridine-2,6-dicarboxylate N-succinyltransferase (286 aa).

It belongs to the transferase hexapeptide repeat family.

The protein resides in the cytoplasm. The enzyme catalyses (S)-2,3,4,5-tetrahydrodipicolinate + succinyl-CoA + H2O = (S)-2-succinylamino-6-oxoheptanedioate + CoA. It functions in the pathway amino-acid biosynthesis; L-lysine biosynthesis via DAP pathway; LL-2,6-diaminopimelate from (S)-tetrahydrodipicolinate (succinylase route): step 1/3. This Rhizobium leguminosarum bv. trifolii (strain WSM2304) protein is 2,3,4,5-tetrahydropyridine-2,6-dicarboxylate N-succinyltransferase.